The chain runs to 257 residues: Paired box protein 1 homolog (257 aa).

Positions 26–37 are enriched in low complexity; sequence TTPSSTSTTPSS. The interval 26-58 is disordered; sequence TTPSSTSTTPSSDNGIQQYSSISTSSGYAPANS. A compositionally biased stretch (polar residues) spans 38-52; it reads DNGIQQYSSISTSSG. A DNA-binding region (paired) is located at residues 61–187; that stretch reads KTAEVNQLGG…SSISRILRNK (127 aa). A PAI subdomain region spans residues 64–120; sequence EVNQLGGVFVNGRPLPFEMRCKIVELSRQGTRPCDISRQLKISHGCVSKILTRFSEN. Positions 139–187 are RED subdomain; the sequence is KVVEYIRSLKRSDPGIFAWEIRDRLISADICDRANLPSVSSISRILRNK.

The protein localises to the nucleus. Functionally, transcription factor. May play a role in pharyngeal cell differentiation. May have a protective role in response to infection by the Gram-negative bacterium Vibrio cholerae. The polypeptide is Paired box protein 1 homolog (Caenorhabditis elegans).